The chain runs to 829 residues: Leucine--tRNA ligase (829 aa).

The 'HIGH' region motif lies at 42–52 (PYPSGNLHMGH). The 'KMSKS' region signature appears at 582-586 (KMSKS). ATP is bound at residue Lys-585.

This sequence belongs to the class-I aminoacyl-tRNA synthetase family.

Its subcellular location is the cytoplasm. The catalysed reaction is tRNA(Leu) + L-leucine + ATP = L-leucyl-tRNA(Leu) + AMP + diphosphate. The polypeptide is Leucine--tRNA ligase (Moorella thermoacetica (strain ATCC 39073 / JCM 9320)).